A 392-amino-acid chain; its full sequence is tRNA (guanine-N(7)-)-methyltransferase (392 aa).

S-adenosyl-L-methionine is bound by residues E123, E148, and D175. Residues K201 and D231 each contribute to the substrate site.

The protein belongs to the class I-like SAM-binding methyltransferase superfamily. TrmB family.

It catalyses the reaction guanosine(46) in tRNA + S-adenosyl-L-methionine = N(7)-methylguanosine(46) in tRNA + S-adenosyl-L-homocysteine. It functions in the pathway tRNA modification; N(7)-methylguanine-tRNA biosynthesis. In terms of biological role, catalyzes the formation of N(7)-methylguanine at position 46 (m7G46) in tRNA. This is tRNA (guanine-N(7)-)-methyltransferase from Campylobacter jejuni subsp. doylei (strain ATCC BAA-1458 / RM4099 / 269.97).